Consider the following 289-residue polypeptide: UPF0276 protein BB1291 (289 aa).

The protein belongs to the UPF0276 family.

The polypeptide is UPF0276 protein BB1291 (Bordetella bronchiseptica (strain ATCC BAA-588 / NCTC 13252 / RB50) (Alcaligenes bronchisepticus)).